A 193-amino-acid chain; its full sequence is Non-specific lipid transfer protein GPI-anchored 2 (193 aa).

The signal sequence occupies residues Met-1–Ala-22. 4 disulfides stabilise this stretch: Cys-38-Cys-83, Cys-48-Cys-67, Cys-68-Cys-110, and Cys-81-Cys-120. Asn-44 carries an N-linked (GlcNAc...) asparagine glycan. The interval Ala-143–Arg-164 is disordered. Residue Gly-165 is the site of GPI-anchor amidated glycine attachment. A propeptide spans Ser-166–Cys-193 (removed in mature form).

Belongs to the plant LTP family. O-glycosylated on hydroxyprolines; noncontiguous hydroxylproline residues are glycosylated with arabinogalactan. In terms of tissue distribution, up-regulated in the epidermis of top stems. Expressed in roots, cotyledons, seedlings, leaves, stems, buds, flower and silique walls. Preferentially expressed in the shoot apical meristem and the root meristem. Also detected in expanding leaves and petals, developing flowers, and elongating pistils, stamens and siliques.

It localises to the cell membrane. In terms of biological role, lipid transfer protein that, together with LTPG1, binds to lipids and functions as a component of the cuticular lipid export machinery that performs extensive export of intracellular lipids (e.g. C29 alkane) from epidermal cells to the surface to build the cuticular wax layer and silique walls. Contributes to pre-invasive defense against some non-host powdery mildew pathogens by preventing the penetration of the epidermal cell wall by the fungal agents (e.g. Blumeria graminis f. sp. hordei (Bgh)). Involved in seed and ovule maturation and development, probably by regulating the fatty acids homeostasis during suberin and sporopollenin biosynthesis or deposition. The chain is Non-specific lipid transfer protein GPI-anchored 2 from Arabidopsis thaliana (Mouse-ear cress).